A 206-amino-acid chain; its full sequence is Small ribosomal subunit protein uS5 (206 aa).

Over residues 1–15 the composition is skewed to polar residues; that stretch reads MTDTPTKQEIQSKND. A disordered region spans residues 1–50; it reads MTDTPTKQEIQSKNDNVPGATPVEQKKNNRNDRKRNRRGDSKNLERDSDW. A compositionally biased stretch (basic and acidic residues) spans 38–50; sequence RGDSKNLERDSDW. The 64-residue stretch at 50-113 folds into the S5 DRBM domain; sequence WQERVVQIRR…SDGKKNLVRV (64 aa).

It belongs to the universal ribosomal protein uS5 family. As to quaternary structure, part of the 30S ribosomal subunit. Contacts proteins S4 and S8.

Functionally, with S4 and S12 plays an important role in translational accuracy. Located at the back of the 30S subunit body where it stabilizes the conformation of the head with respect to the body. This Prochlorococcus marinus (strain MIT 9301) protein is Small ribosomal subunit protein uS5.